Reading from the N-terminus, the 572-residue chain is Proline--tRNA ligase (572 aa).

Belongs to the class-II aminoacyl-tRNA synthetase family. ProS type 1 subfamily. As to quaternary structure, homodimer.

It is found in the cytoplasm. The catalysed reaction is tRNA(Pro) + L-proline + ATP = L-prolyl-tRNA(Pro) + AMP + diphosphate. Functionally, catalyzes the attachment of proline to tRNA(Pro) in a two-step reaction: proline is first activated by ATP to form Pro-AMP and then transferred to the acceptor end of tRNA(Pro). As ProRS can inadvertently accommodate and process non-cognate amino acids such as alanine and cysteine, to avoid such errors it has two additional distinct editing activities against alanine. One activity is designated as 'pretransfer' editing and involves the tRNA(Pro)-independent hydrolysis of activated Ala-AMP. The other activity is designated 'posttransfer' editing and involves deacylation of mischarged Ala-tRNA(Pro). The misacylated Cys-tRNA(Pro) is not edited by ProRS. This chain is Proline--tRNA ligase, found in Psychrobacter arcticus (strain DSM 17307 / VKM B-2377 / 273-4).